The sequence spans 34 residues: Photosystem II reaction center protein M (34 aa).

A helical transmembrane segment spans residues 7-27 (GFVATLLFVLVPAIFLIILYI).

This sequence belongs to the PsbM family. PSII is composed of 1 copy each of membrane proteins PsbA, PsbB, PsbC, PsbD, PsbE, PsbF, PsbH, PsbI, PsbJ, PsbK, PsbL, PsbM, PsbT, PsbX, PsbY, PsbZ, Psb30/Ycf12, peripheral proteins PsbO, CyanoQ (PsbQ), PsbU, PsbV and a large number of cofactors. It forms dimeric complexes.

The protein resides in the cellular thylakoid membrane. In terms of biological role, one of the components of the core complex of photosystem II (PSII). PSII is a light-driven water:plastoquinone oxidoreductase that uses light energy to abstract electrons from H(2)O, generating O(2) and a proton gradient subsequently used for ATP formation. It consists of a core antenna complex that captures photons, and an electron transfer chain that converts photonic excitation into a charge separation. This subunit is found at the monomer-monomer interface. This is Photosystem II reaction center protein M from Synechococcus sp. (strain RCC307).